A 249-amino-acid chain; its full sequence is Probable transcriptional regulatory protein Minf_0651 (249 aa).

Belongs to the TACO1 family.

It localises to the cytoplasm. The chain is Probable transcriptional regulatory protein Minf_0651 from Methylacidiphilum infernorum (isolate V4) (Methylokorus infernorum (strain V4)).